Reading from the N-terminus, the 207-residue chain is GTP cyclohydrolase-2 (207 aa).

49-53 contacts GTP; the sequence is RTHSE. Residues Cys-54, Cys-65, and Cys-67 each contribute to the Zn(2+) site. Residues Gln-70, 92–94, and Thr-114 contribute to the GTP site; that span reads EGR. Catalysis depends on Asp-126, which acts as the Proton acceptor. The active-site Nucleophile is Arg-128. GTP is bound by residues Thr-149 and Lys-154.

The protein belongs to the GTP cyclohydrolase II family. Requires Zn(2+) as cofactor.

The catalysed reaction is GTP + 4 H2O = 2,5-diamino-6-hydroxy-4-(5-phosphoribosylamino)-pyrimidine + formate + 2 phosphate + 3 H(+). Its pathway is cofactor biosynthesis; riboflavin biosynthesis; 5-amino-6-(D-ribitylamino)uracil from GTP: step 1/4. In terms of biological role, catalyzes the conversion of GTP to 2,5-diamino-6-ribosylamino-4(3H)-pyrimidinone 5'-phosphate (DARP), formate and pyrophosphate. The sequence is that of GTP cyclohydrolase-2 from Hahella chejuensis (strain KCTC 2396).